The chain runs to 368 residues: Anhydro-N-acetylmuramic acid kinase (368 aa).

An ATP-binding site is contributed by 13 to 20; it reads GTSLDGVD.

Belongs to the anhydro-N-acetylmuramic acid kinase family.

It catalyses the reaction 1,6-anhydro-N-acetyl-beta-muramate + ATP + H2O = N-acetyl-D-muramate 6-phosphate + ADP + H(+). The protein operates within amino-sugar metabolism; 1,6-anhydro-N-acetylmuramate degradation. Its pathway is cell wall biogenesis; peptidoglycan recycling. Catalyzes the specific phosphorylation of 1,6-anhydro-N-acetylmuramic acid (anhMurNAc) with the simultaneous cleavage of the 1,6-anhydro ring, generating MurNAc-6-P. Is required for the utilization of anhMurNAc either imported from the medium or derived from its own cell wall murein, and thus plays a role in cell wall recycling. This chain is Anhydro-N-acetylmuramic acid kinase, found in Hahella chejuensis (strain KCTC 2396).